The chain runs to 89 residues: Small ribosomal subunit protein uS15 (89 aa).

Residues 1–24 are disordered; sequence MSLNAEQKSEIVEQFRRSPSDTGS. Over residues 7-19 the composition is skewed to basic and acidic residues; that stretch reads QKSEIVEQFRRSP.

Belongs to the universal ribosomal protein uS15 family. In terms of assembly, part of the 30S ribosomal subunit. Forms a bridge to the 50S subunit in the 70S ribosome, contacting the 23S rRNA.

In terms of biological role, one of the primary rRNA binding proteins, it binds directly to 16S rRNA where it helps nucleate assembly of the platform of the 30S subunit by binding and bridging several RNA helices of the 16S rRNA. Its function is as follows. Forms an intersubunit bridge (bridge B4) with the 23S rRNA of the 50S subunit in the ribosome. This Halorhodospira halophila (strain DSM 244 / SL1) (Ectothiorhodospira halophila (strain DSM 244 / SL1)) protein is Small ribosomal subunit protein uS15.